A 501-amino-acid polypeptide reads, in one-letter code: Ribose import ATP-binding protein RbsA (501 aa).

2 ABC transporter domains span residues 5–241 (LQLK…VGRK) and 252–495 (APGD…VGKL). Residue 37–44 (GENGAGKS) coordinates ATP.

The protein belongs to the ABC transporter superfamily. Ribose importer (TC 3.A.1.2.1) family. In terms of assembly, the complex is composed of an ATP-binding protein (RbsA), two transmembrane proteins (RbsC) and a solute-binding protein (RbsB).

The protein resides in the cell inner membrane. The catalysed reaction is D-ribose(out) + ATP + H2O = D-ribose(in) + ADP + phosphate + H(+). Functionally, part of the ABC transporter complex RbsABC involved in ribose import. Responsible for energy coupling to the transport system. The protein is Ribose import ATP-binding protein RbsA of Escherichia coli (strain UTI89 / UPEC).